We begin with the raw amino-acid sequence, 1286 residues long: DNA-directed RNA polymerase subunit beta' (1286 aa).

Positions 58, 60, 73, and 76 each coordinate Zn(2+). Mg(2+)-binding residues include Asp533, Asp535, and Asp537. Zn(2+) contacts are provided by Cys867, Cys944, Cys951, and Cys954.

Belongs to the RNA polymerase beta' chain family. The RNAP catalytic core consists of 2 alpha, 1 beta, 1 beta' and 1 omega subunit. When a sigma factor is associated with the core the holoenzyme is formed, which can initiate transcription. It depends on Mg(2+) as a cofactor. The cofactor is Zn(2+).

It catalyses the reaction RNA(n) + a ribonucleoside 5'-triphosphate = RNA(n+1) + diphosphate. In terms of biological role, DNA-dependent RNA polymerase catalyzes the transcription of DNA into RNA using the four ribonucleoside triphosphates as substrates. The polypeptide is DNA-directed RNA polymerase subunit beta' (Tropheryma whipplei (strain TW08/27) (Whipple's bacillus)).